Reading from the N-terminus, the 213-residue chain is TVP38/TMEM64 family membrane protein YtxB (213 aa).

6 helical membrane passes run Trp-9–Val-29, Ile-34–Ile-54, Leu-58–Leu-78, Leu-81–Phe-101, Ala-159–Gly-179, and Leu-181–Phe-201.

This sequence belongs to the TVP38/TMEM64 family.

It localises to the cell membrane. The sequence is that of TVP38/TMEM64 family membrane protein YtxB (ytxB) from Bacillus subtilis (strain 168).